Consider the following 1040-residue polypeptide: Beta-galactosidase (1040 aa).

Substrate contacts are provided by Asn-111 and Asp-210. Position 210 (Asp-210) interacts with Na(+). 3 residues coordinate Mg(2+): Glu-427, His-429, and Glu-472. Substrate contacts are provided by residues Glu-472 and 548–551 (EYAH). The Proton donor role is filled by Glu-472. Glu-548 (nucleophile) is an active-site residue. Residue Asn-608 participates in Mg(2+) binding. The Na(+) site is built by Phe-612 and Asp-615. 2 residues coordinate substrate: Asp-615 and Trp-1016.

This sequence belongs to the glycosyl hydrolase 2 family. Homotetramer. The cofactor is Mg(2+). It depends on Na(+) as a cofactor.

It catalyses the reaction Hydrolysis of terminal non-reducing beta-D-galactose residues in beta-D-galactosides.. This Pectobacterium atrosepticum (strain SCRI 1043 / ATCC BAA-672) (Erwinia carotovora subsp. atroseptica) protein is Beta-galactosidase.